The primary structure comprises 211 residues: Claudin-1 (211 aa).

Residues 1–7 are Cytoplasmic-facing; it reads MANAGLQ. Residues 8-28 form a helical membrane-spanning segment; sequence LLGFILASLGWIGSIVSTALP. The Extracellular portion of the chain corresponds to 29–81; the sequence is QWKIYSYAGDNIVTAQAIYEGLWMSCVSQSTGQIQCKVFDSLLNLNSTLQATR. Residues Cys-54 and Cys-64 are joined by a disulfide bond. Residues 82–102 traverse the membrane as a helical segment; sequence ALMVIGILLGLIAIFVSTIGM. The Cytoplasmic portion of the chain corresponds to 103–115; the sequence is KCMRCLEDDEVQK. A helical membrane pass occupies residues 116–136; that stretch reads MWMAVIGGIIFLISGLATLVA. Residues 137-163 are Extracellular-facing; that stretch reads TAWYGNRIVQEFYDPLTPINARYEFGQ. A helical transmembrane segment spans residues 164–184; that stretch reads ALFTGWAAASLCLLGGVLLSC. The Cytoplasmic portion of the chain corresponds to 185-211; the sequence is SCPRKTTSYPTPRPYPKPTPSSGKDYV. The disordered stretch occupies residues 190 to 211; that stretch reads TTSYPTPRPYPKPTPSSGKDYV. Residues 210-211 form an interactions with TJP1, TJP2, TJP3 and PATJ region; sequence YV.

This sequence belongs to the claudin family. In terms of assembly, can form homo- and heteropolymers with other CLDN. Homopolymers interact with CLDN3, but not CLDN2, homopolymers. Directly interacts with TJP1/ZO-1, TJP2/ZO-2 and TJP3/ZO-3. Interacts with MPDZ and PATJ. Interacts with OCLN, CD81, CLDN4, CLDN6 and CLDN9. As to expression, detected in epidermis and liver (at protein level). Widely expressed, with highest levels in liver and kidney.

It is found in the cell junction. Its subcellular location is the tight junction. The protein localises to the cell membrane. The protein resides in the basolateral cell membrane. Its function is as follows. Claudins function as major constituents of the tight junction complexes that regulate the permeability of epithelia. While some claudin family members play essential roles in the formation of impermeable barriers, others mediate the permeability to ions and small molecules. Often, several claudin family members are coexpressed and interact with each other, and this determines the overall permeability. CLDN1 is required to prevent the paracellular diffusion of small molecules through tight junctions in the epidermis and is required for the normal barrier function of the skin. Required for normal water homeostasis and to prevent excessive water loss through the skin, probably via an indirect effect on the expression levels of other proteins, since CLDN1 itself seems to be dispensable for water barrier formation in keratinocyte tight junctions. The protein is Claudin-1 (Cldn1) of Mus musculus (Mouse).